Reading from the N-terminus, the 389-residue chain is Large envelope protein (389 aa).

N-acetylmethionine is present on M1. Residue G2 is the site of N-myristoyl glycine; by host attachment. Positions 2–108 are pre-S1; sequence GTNLSVPNPL…PPLRDTHPQA (107 aa). The segment at 2–163 is pre-S; the sequence is GTNLSVPNPL…LSKTGDPVPN (162 aa). The Virion surface; in external conformation segment spans residues 2–170; it reads GTNLSVPNPL…VPNMENIASG (169 aa). Residues 2 to 242 lie on the Intravirion; in internal conformation side of the membrane; that stretch reads GTNLSVPNPL…PGYRWMCLRR (241 aa). The segment at 73-107 is disordered; it reads ILTSVPAAPPPASTNRQSGRQPTPLSPPLRDTHPQ. The span at 85 to 95 shows a compositional bias: polar residues; it reads STNRQSGRQPT. The pre-S2 stretch occupies residues 109-163; it reads MQWNSTTFHQTLQDPRVRALYFPAGGSSSGTVSPAQNTVSAISSILSKTGDPVPN. The helical transmembrane segment at 171–191 threads the bilayer; that stretch reads LLGPLLVLQAGFFLLTKILTI. Over 192–242 the chain is Intravirion; in external conformation; it reads PQSLDSWWTSLNFLGGTPVCLGQNSQSQISSHSPTCCPPICPGYRWMCLRR. A helical transmembrane segment spans residues 243–263; sequence FIIFLCILLLCLIFLLVLLDY. Over 264–337 the chain is Virion surface; the sequence is QGMLPVCPLI…WASVRFSWLS (74 aa). An N-linked (GlcNAc...) asparagine; by host glycan is attached at N309. A helical membrane pass occupies residues 338 to 358; the sequence is LLVPFVQWFVGLSPTVWLSVI. Over 359–364 the chain is Intravirion; it reads WMMWYW. The chain crosses the membrane as a helical span at residues 365–387; the sequence is GPSLYNILSPFMPLLPIFFCLWV. The Virion surface portion of the chain corresponds to 388 to 389; that stretch reads YI.

Belongs to the orthohepadnavirus major surface antigen family. Interacts (via its myristoylated pre-S1 region) with the host SLC10A1/NTCP; this interaction is essential for viral entry. In terms of assembly, in its internal form (Li-HBsAg), interacts with the capsid protein and with the isoform S. Interacts with host chaperone CANX. As to quaternary structure, associates with host chaperone CANX through its pre-S2 N glycan; this association may be essential for isoform M proper secretion. Interacts with isoform L. Interacts with the antigens of satellite virus HDV (HDVAgs); this interaction is required for encapsidation of HDV genomic RNA. In terms of processing, isoform M is N-terminally acetylated by host at a ratio of 90%, and N-glycosylated by host at the pre-S2 region. Post-translationally, myristoylated; this modification is essential for its interaction with the host protein SLC10A1/NTCP.

The protein resides in the virion membrane. Its function is as follows. The large envelope protein exists in two topological conformations, one which is termed 'external' or Le-HBsAg and the other 'internal' or Li-HBsAg. In its external conformation the protein attaches the virus to cell receptors and thereby initiating infection. This interaction determines the species specificity and liver tropism. This attachment induces virion internalization predominantly through caveolin-mediated endocytosis. The large envelope protein also assures fusion between virion membrane and endosomal membrane. In its internal conformation the protein plays a role in virion morphogenesis and mediates the contact with the nucleocapsid like a matrix protein. Functionally, the middle envelope protein plays an important role in the budding of the virion. It is involved in the induction of budding in a nucleocapsid independent way. In this process the majority of envelope proteins bud to form subviral lipoprotein particles of 22 nm of diameter that do not contain a nucleocapsid. The chain is Large envelope protein from Hepatitis B virus genotype B1 subtype adw (isolate Japan/pJDW233/1988) (HBV-B).